We begin with the raw amino-acid sequence, 475 residues long: ATP synthase subunit beta, chloroplastic (475 aa).

Position 156-163 (Gly156–Thr163) interacts with ATP.

The protein belongs to the ATPase alpha/beta chains family. As to quaternary structure, F-type ATPases have 2 components, CF(1) - the catalytic core - and CF(0) - the membrane proton channel. CF(1) has five subunits: alpha(3), beta(3), gamma(1), delta(1), epsilon(1). CF(0) has four main subunits: a(1), b(1), b'(1) and c(9-12).

It localises to the plastid. The protein localises to the chloroplast thylakoid membrane. The enzyme catalyses ATP + H2O + 4 H(+)(in) = ADP + phosphate + 5 H(+)(out). Its function is as follows. Produces ATP from ADP in the presence of a proton gradient across the membrane. The catalytic sites are hosted primarily by the beta subunits. The sequence is that of ATP synthase subunit beta, chloroplastic from Phaeodactylum tricornutum (strain CCAP 1055/1).